A 199-amino-acid chain; its full sequence is Protein GrpE (199 aa).

Residues 20 to 52 (YKVENEILEEETDEESQHQEPALGHPSYTALEE) are disordered.

Belongs to the GrpE family. Homodimer.

The protein localises to the cytoplasm. Participates actively in the response to hyperosmotic and heat shock by preventing the aggregation of stress-denatured proteins, in association with DnaK and GrpE. It is the nucleotide exchange factor for DnaK and may function as a thermosensor. Unfolded proteins bind initially to DnaJ; upon interaction with the DnaJ-bound protein, DnaK hydrolyzes its bound ATP, resulting in the formation of a stable complex. GrpE releases ADP from DnaK; ATP binding to DnaK triggers the release of the substrate protein, thus completing the reaction cycle. Several rounds of ATP-dependent interactions between DnaJ, DnaK and GrpE are required for fully efficient folding. This chain is Protein GrpE, found in Legionella pneumophila (strain Corby).